The following is a 917-amino-acid chain: Protein STE5 (917 aa).

Disordered stretches follow at residues 1-25 and 58-151; these read MMETPTDNIVSPFHNFGSSTQYSGT and FQRS…LSDN. Polar residues predominate over residues 16–25; that stretch reads FGSSTQYSGT. The segment covering 69–84 has biased composition (low complexity); that stretch reads SPSPISSSTFSFSPKS. 2 stretches are compositionally biased toward polar residues: residues 85 to 110 and 118 to 138; these read RVTSSNSSGNEDGNLMNTPSTVSTDY and TSSLPRPNSNLFHASNSNLSR. S329 carries the post-translational modification Phosphoserine. Residues 778–794 are compositionally biased toward acidic residues; sequence HDDDDEEDNDDSTDNEL. Residues 778–821 form a disordered region; it reads HDDDDEEDNDDSTDNELDNSSGSLSDAESTTTIHIDSPFDNENA. Residues 799–821 show a composition bias toward polar residues; that stretch reads GSLSDAESTTTIHIDSPFDNENA.

This sequence to yeast FAR1. In terms of processing, may be regulated at the phosphorylation level, and by the mating type of the cell and depends on an intact pheromone-response pathway.

It localises to the cytoplasm. In terms of biological role, component of the pheromone signal transduction pathway. It mediates pheromone signals acting between STE20 and STE11. It is absolutely required for pheromone-induced transcription of FUS1. May play a role in cell-cycle arrest in response to pheromone. In Saccharomyces cerevisiae (strain ATCC 204508 / S288c) (Baker's yeast), this protein is Protein STE5 (STE5).